Reading from the N-terminus, the 124-residue chain is Ribonuclease pancreatic (124 aa).

A compositionally biased stretch (basic and acidic residues) spans 1-13 (KESAAAKFERQHI). A disordered region spans residues 1–23 (KESAAAKFERQHIDSSTSSVSSS). Substrate contacts are provided by K7 and R10. The active-site Proton acceptor is the H12. 4 cysteine pairs are disulfide-bonded: C26–C84, C40–C95, C58–C110, and C65–C72. A glycan (N-linked (GlcNAc...) asparagine) is linked at N34. Substrate-binding positions include 41–45 (KPVNT), K66, and R85. Residue H119 is the Proton donor of the active site.

This sequence belongs to the pancreatic ribonuclease family. Monomer. Interacts with and forms tight 1:1 complexes with RNH1. Dimerization of two such complexes may occur. Interaction with RNH1 inhibits this protein. Pancreas.

Its subcellular location is the secreted. It catalyses the reaction an [RNA] containing cytidine + H2O = an [RNA]-3'-cytidine-3'-phosphate + a 5'-hydroxy-ribonucleotide-3'-[RNA].. It carries out the reaction an [RNA] containing uridine + H2O = an [RNA]-3'-uridine-3'-phosphate + a 5'-hydroxy-ribonucleotide-3'-[RNA].. Endonuclease that catalyzes the cleavage of RNA on the 3' side of pyrimidine nucleotides. Acts on single-stranded and double-stranded RNA. The sequence is that of Ribonuclease pancreatic (RNASE1) from Giraffa camelopardalis (Giraffe).